The sequence spans 61 residues: Photosystem II reaction center protein K (61 aa).

Positions 1 to 24 are excised as a propeptide; sequence MLNILNLICICLNFALYSSSFFFT. A helical membrane pass occupies residues 40-60; it reads MPVIPLFFFLLAFVWQAAVSF.

Belongs to the PsbK family. As to quaternary structure, PSII is composed of 1 copy each of membrane proteins PsbA, PsbB, PsbC, PsbD, PsbE, PsbF, PsbH, PsbI, PsbJ, PsbK, PsbL, PsbM, PsbT, PsbX, PsbY, PsbZ, Psb30/Ycf12, at least 3 peripheral proteins of the oxygen-evolving complex and a large number of cofactors. It forms dimeric complexes.

Its subcellular location is the plastid. The protein resides in the chloroplast thylakoid membrane. One of the components of the core complex of photosystem II (PSII). PSII is a light-driven water:plastoquinone oxidoreductase that uses light energy to abstract electrons from H(2)O, generating O(2) and a proton gradient subsequently used for ATP formation. It consists of a core antenna complex that captures photons, and an electron transfer chain that converts photonic excitation into a charge separation. This Populus alba (White poplar) protein is Photosystem II reaction center protein K.